The following is an 89-amino-acid chain: Small ribosomal subunit protein uS15 (89 aa).

The protein belongs to the universal ribosomal protein uS15 family. Part of the 30S ribosomal subunit. Forms a bridge to the 50S subunit in the 70S ribosome, contacting the 23S rRNA.

Functionally, one of the primary rRNA binding proteins, it binds directly to 16S rRNA where it helps nucleate assembly of the platform of the 30S subunit by binding and bridging several RNA helices of the 16S rRNA. In terms of biological role, forms an intersubunit bridge (bridge B4) with the 23S rRNA of the 50S subunit in the ribosome. The protein is Small ribosomal subunit protein uS15 of Chlorobium chlorochromatii (strain CaD3).